Reading from the N-terminus, the 69-residue chain is uncharacterized protein (69 aa).

Topologically, residues 1 to 15 (MLLYIVIIVACIISK) are cytoplasmic. The helical transmembrane segment at 16-36 (LVPNEYWAIHLFFIIMIFMVY) threads the bilayer. At 37 to 69 (MYEKLDIHQKYQFWNYTMSGLSGHNVQITCKCY) the chain is on the extracellular side. Asparagine 51 carries N-linked (GlcNAc...) asparagine; by host glycosylation.

Belongs to the asfivirus X69R family.

It is found in the host membrane. This is an uncharacterized protein from Ornithodoros (relapsing fever ticks).